A 196-amino-acid polypeptide reads, in one-letter code: Protein GrpE (196 aa).

Residues 1 to 41 (MSSKEQKTPEGQAPEEIITEQHDDVEAVEPEVSAEQVDPRD) are disordered.

This sequence belongs to the GrpE family. In terms of assembly, homodimer.

It is found in the cytoplasm. In terms of biological role, participates actively in the response to hyperosmotic and heat shock by preventing the aggregation of stress-denatured proteins, in association with DnaK and GrpE. It is the nucleotide exchange factor for DnaK and may function as a thermosensor. Unfolded proteins bind initially to DnaJ; upon interaction with the DnaJ-bound protein, DnaK hydrolyzes its bound ATP, resulting in the formation of a stable complex. GrpE releases ADP from DnaK; ATP binding to DnaK triggers the release of the substrate protein, thus completing the reaction cycle. Several rounds of ATP-dependent interactions between DnaJ, DnaK and GrpE are required for fully efficient folding. In Klebsiella pneumoniae subsp. pneumoniae (strain ATCC 700721 / MGH 78578), this protein is Protein GrpE.